A 62-amino-acid chain; its full sequence is Large ribosomal subunit protein bL28 (62 aa).

It belongs to the bacterial ribosomal protein bL28 family.

The sequence is that of Large ribosomal subunit protein bL28 from Thermoanaerobacter pseudethanolicus (strain ATCC 33223 / 39E) (Clostridium thermohydrosulfuricum).